The chain runs to 256 residues: Pimeloyl-[acyl-carrier protein] methyl ester esterase (256 aa).

The region spanning 17 to 241 (VYLIHGWGAN…KAAHAPFLSH (225 aa)) is the AB hydrolase-1 domain. Residues tryptophan 23, 83 to 84 (SL), and 145 to 149 (FLQLQ) each bind substrate. Serine 83 serves as the catalytic Nucleophile. Active-site residues include aspartate 207 and histidine 235. Residue histidine 235 participates in substrate binding.

It belongs to the AB hydrolase superfamily. Carboxylesterase BioH family. In terms of assembly, monomer.

It localises to the cytoplasm. The catalysed reaction is 6-carboxyhexanoyl-[ACP] methyl ester + H2O = 6-carboxyhexanoyl-[ACP] + methanol + H(+). It participates in cofactor biosynthesis; biotin biosynthesis. The physiological role of BioH is to remove the methyl group introduced by BioC when the pimeloyl moiety is complete. It allows to synthesize pimeloyl-ACP via the fatty acid synthetic pathway through the hydrolysis of the ester bonds of pimeloyl-ACP esters. In Neisseria meningitidis serogroup C / serotype 2a (strain ATCC 700532 / DSM 15464 / FAM18), this protein is Pimeloyl-[acyl-carrier protein] methyl ester esterase.